A 1196-amino-acid polypeptide reads, in one-letter code: MGHFEKGQHALLNEGEENEMEIFGYRTQGCRKSLCLAGSIFSFGILPLVFYWRPAWHVWAHCVPCSLQEADTVLLRTTDEFQIYSWKKVIWIYLSALNSAFGLTPDHPLMTDEEYIINRAIRKPDLKVRCIKVQKIRYVWNYLEGQFQKIGSLEDWLSSAKIHQKFGSGLTREEQEIRRLICGPNTIDVEVTPIWKLLIKEVLNPFYIFQLFSVCLWFSEDYKEYAFAIIIMSIISISLTVYDLREQSVKLHHLVESHNSITVSVCGRKAGVQELESRVLVPGDLLILTGNKVLMPCDAVLIEGSCVVDEGMLTGESIPVTKTPLPKMDSSVPWKTQSEADYKRHVLFCGTEVIQAKAACSGTVRAVVLQTGFNTAKGDLVRSILYPKPVNFQLYRDAIRFLLCLVGTATIGMIYTLCVYVLSGEPPEEVVRKALDVITIAVPPALPAALTTGIIYAQRRLKKRGIFCISPQRINVCGQLNLVCFDKTGTLTRDGLDLWGVVSCDRNGFQEVHSFASGQALPWGPLCAAMASCHSLILLDGTIQGDPLDLKMFEATTWEMAFSGDDFHIKGVPAHAMVVKPCRTASQVPVEGIAILHQFPFSSALQRMTVIVQEMGGDRLAFMKGAPERVASFCQPETVPTSFVSELQIYTTQGFRVIALAYKKLENDHHATTLTRETVESDLIFLGLLILENRLKEETKPVLEELISARIRTVMITGDNLQTAITVARKSGMVSESQKVILIEANETTGSSSASISWTLVEEKKHIMYGNQDNYINIRDEVSDKGREGSYHFALTGKSFHVISQHFSSLLPKILINGTIFARMSPGQKSSLVEEFQKLDYFVGMCGDGANDCGALKMAHVGISLSEQEASVASPFTSKTPNIECVPHLIKEGRAALVTSFCMFKYMALYSMIQYVGVLLLYWETNSLSNYQFLFQDLAITTLIGVTMNLNGAYPKLVPFRPAGRLISPPLLLSVIFNILLSLAMHIAGFILVQRQPWYSVEIHSACTVQNESISELTMSPTAPEKMESNSTFTSFENTTVWFLGTINCITVALVFSKGKPFRQPTYTNYIFVLVLIIQLGVCLFILFADIPELYRRLDLLCTPVLWRASIVIMLSLNFIVSLVAEEAVIENRALWMMIKRCFGYQSKSQYRIWQRDLANDPSWPPLNQTSHSDMPECGRGVSYSNPVFESNEEQL.

At 1-31 the chain is on the cytoplasmic side; sequence MGHFEKGQHALLNEGEENEMEIFGYRTQGCR. Residues 32-52 lie within the membrane without spanning it; it reads KSLCLAGSIFSFGILPLVFYW. Residues 53–197 lie on the Cytoplasmic side of the membrane; that stretch reads RPAWHVWAHC…DVEVTPIWKL (145 aa). Residues 198–218 form a helical membrane-spanning segment; sequence LIKEVLNPFYIFQLFSVCLWF. Residues 219-223 are Lumenal-facing; that stretch reads SEDYK. The helical transmembrane segment at 224 to 244 threads the bilayer; the sequence is EYAFAIIIMSIISISLTVYDL. The Cytoplasmic segment spans residues 245-400; the sequence is REQSVKLHHL…NFQLYRDAIR (156 aa). The chain crosses the membrane as a helical span at residues 401–421; the sequence is FLLCLVGTATIGMIYTLCVYV. Residues 422–436 lie on the Lumenal side of the membrane; it reads LSGEPPEEVVRKALD. Residues 437-457 form a helical membrane-spanning segment; sequence VITIAVPPALPAALTTGIIYA. Over 458–900 the chain is Cytoplasmic; the sequence is QRRLKKRGIF…KEGRAALVTS (443 aa). Residue D486 is the 4-aspartylphosphate intermediate of the active site. Residues D848 and D852 each coordinate Mg(2+). The chain crosses the membrane as a helical span at residues 901–921; it reads FCMFKYMALYSMIQYVGVLLL. Residues 922 to 932 are Lumenal-facing; sequence YWETNSLSNYQ. A helical membrane pass occupies residues 933–953; sequence FLFQDLAITTLIGVTMNLNGA. The Cytoplasmic segment spans residues 954–972; the sequence is YPKLVPFRPAGRLISPPLL. A helical transmembrane segment spans residues 973-993; the sequence is LSVIFNILLSLAMHIAGFILV. The Lumenal segment spans residues 994 to 1035; it reads QRQPWYSVEIHSACTVQNESISELTMSPTAPEKMESNSTFTS. A helical membrane pass occupies residues 1036-1056; the sequence is FENTTVWFLGTINCITVALVF. The Cytoplasmic segment spans residues 1057 to 1070; that stretch reads SKGKPFRQPTYTNY. The chain crosses the membrane as a helical span at residues 1071–1091; it reads IFVLVLIIQLGVCLFILFADI. Topologically, residues 1092–1109 are lumenal; sequence PELYRRLDLLCTPVLWRA. Residues 1110 to 1130 traverse the membrane as a helical segment; that stretch reads SIVIMLSLNFIVSLVAEEAVI. The Cytoplasmic portion of the chain corresponds to 1131-1196; the sequence is ENRALWMMIK…PVFESNEEQL (66 aa).

This sequence belongs to the cation transport ATPase (P-type) (TC 3.A.3) family. Type V subfamily. As to expression, expressed in heart, placenta, liver, skeletal muscles, and pancreas. Lower levels of expression are also detected in brain, lung and kidney. Weakly expressed in the adult brain. Expression in fetal brain is higher than in adult brain, with levels similar to several other fetal tissues including spleen and skeletal muscle. In adult brain expressed at low levels in all tissues examined, including the temporal lobe and putamen. Highly expressed in the respiratory and integumentary systems.

It is found in the early endosome membrane. The protein localises to the late endosome membrane. It localises to the recycling endosome membrane. It carries out the reaction ATP + H2O = ADP + phosphate + H(+). The protein is Probable cation-transporting ATPase 13A4 (ATP13A4) of Homo sapiens (Human).